Here is a 352-residue protein sequence, read N- to C-terminus: Fe(3+) ions import ATP-binding protein FbpC (352 aa).

Residues 5–239 form the ABC transporter domain; sequence LHIGHLSKSF…PADLDAVLFI (235 aa). 37–44 is an ATP binding site; that stretch reads GASGCGKT.

It belongs to the ABC transporter superfamily. Fe(3+) ion importer (TC 3.A.1.10) family. As to quaternary structure, the complex is composed of two ATP-binding proteins (FbpC), two transmembrane proteins (FbpB) and a solute-binding protein (FbpA).

Its subcellular location is the cell inner membrane. The enzyme catalyses Fe(3+)(out) + ATP + H2O = Fe(3+)(in) + ADP + phosphate + H(+). In terms of biological role, part of the ABC transporter complex FbpABC involved in Fe(3+) ions import. Responsible for energy coupling to the transport system. This chain is Fe(3+) ions import ATP-binding protein FbpC, found in Neisseria gonorrhoeae.